Consider the following 188-residue polypeptide: uncharacterized protein (188 aa).

The span at 1–15 shows a compositional bias: basic and acidic residues; that stretch reads MVSSKDKIKEELKQE. The disordered stretch occupies residues 1–21; the sequence is MVSSKDKIKEELKQEEPEENV.

This is an uncharacterized protein from Saccharolobus islandicus (Sulfolobus islandicus).